The chain runs to 1378 residues: DNA-directed RNA polymerase subunit beta (1378 aa).

Belongs to the RNA polymerase beta chain family. The RNAP catalytic core consists of 2 alpha, 1 beta, 1 beta' and 1 omega subunit. When a sigma factor is associated with the core the holoenzyme is formed, which can initiate transcription.

It catalyses the reaction RNA(n) + a ribonucleoside 5'-triphosphate = RNA(n+1) + diphosphate. In terms of biological role, DNA-dependent RNA polymerase catalyzes the transcription of DNA into RNA using the four ribonucleoside triphosphates as substrates. This chain is DNA-directed RNA polymerase subunit beta, found in Agrobacterium fabrum (strain C58 / ATCC 33970) (Agrobacterium tumefaciens (strain C58)).